We begin with the raw amino-acid sequence, 467 residues long: Indoleacetamide hydrolase (467 aa).

Active-site charge relay system residues include lysine 74 and serine 149. Serine 173 acts as the Acyl-ester intermediate in catalysis.

The protein belongs to the amidase family.

The protein operates within plant hormone metabolism; auxin biosynthesis. Its function is as follows. Hydrolyzes indole-3-acetamide (IAM) into indole-3-acetic acid (IAA). This Agrobacterium vitis (Rhizobium vitis) protein is Indoleacetamide hydrolase (TA-iaaH).